The chain runs to 614 residues: UvrABC system protein C (614 aa).

Residues 16–94 (SRPGVYRMFG…VKSLKPRFNV (79 aa)) enclose the GIY-YIG domain. Residues 204–239 (GELQKRLASEMEAASEAMEFETAARLRDRIRAIAHV) form the UVR domain.

It belongs to the UvrC family. As to quaternary structure, interacts with UvrB in an incision complex.

Its subcellular location is the cytoplasm. Its function is as follows. The UvrABC repair system catalyzes the recognition and processing of DNA lesions. UvrC both incises the 5' and 3' sides of the lesion. The N-terminal half is responsible for the 3' incision and the C-terminal half is responsible for the 5' incision. In Hyphomonas neptunium (strain ATCC 15444), this protein is UvrABC system protein C.